Here is a 544-residue protein sequence, read N- to C-terminus: Chaperonin GroEL 1 (544 aa).

ATP is bound by residues 30–33 (TLGP), Lys51, 87–91 (DGTTT), Gly415, 481–483 (DAL), and Asp497.

The protein belongs to the chaperonin (HSP60) family. As to quaternary structure, forms a cylinder of 14 subunits composed of two heptameric rings stacked back-to-back. Interacts with the co-chaperonin GroES.

The protein localises to the cytoplasm. The catalysed reaction is ATP + H2O + a folded polypeptide = ADP + phosphate + an unfolded polypeptide.. Functionally, together with its co-chaperonin GroES, plays an essential role in assisting protein folding. The GroEL-GroES system forms a nano-cage that allows encapsulation of the non-native substrate proteins and provides a physical environment optimized to promote and accelerate protein folding. This chain is Chaperonin GroEL 1, found in Chlamydia pneumoniae (Chlamydophila pneumoniae).